The following is a 479-amino-acid chain: MNIETLFPLDPNVKVRTRFAPSPTGYLHVGGARTALYSWLYAKHFNGEFVLRIEDTDLERSTPEATAAILEGMEWLNLTWEHGPYFQTKRFDRYNQVIDQMIEQGLAYRCYCSKDRLEQLRNEQEASKEKPRYDRHCLNHQDRSINEPHVVRFKNPQQGSVVFDDAVRGRIEISNSELDDLIIRRTDGSPTYNFCVVVDDWDMGITHVVRGEDHINNTPRQINILKALGAPIPTYAHVSMINGDDGQKLSKRHGAVSVMQYRDDGYLPEALINYLVRLGWGHGDQEIFSREEMIELFDLHSVSRSASAFNTEKLQWLNQHYMRTLPAEYVAKYLEWHMHDQAIDIANGPTLTELIPVLSERAKTLKELATASRYFYQEFDAYDEKAVAKTFKLEAEQPLTMLWEKLTALVDWNVENIHQAMNATATELGIGMGKVGMPFRLAVTGSAQSPSMDITAKLVGRERTLARLQKAIKFIQAQS.

The 'HIGH' region signature appears at Pro-21–Gly-31. Positions Lys-248–Arg-252 match the 'KMSKS' region motif. Lys-251 contributes to the ATP binding site.

It belongs to the class-I aminoacyl-tRNA synthetase family. Glutamate--tRNA ligase type 1 subfamily. In terms of assembly, monomer.

The protein resides in the cytoplasm. It catalyses the reaction tRNA(Glu) + L-glutamate + ATP = L-glutamyl-tRNA(Glu) + AMP + diphosphate. In terms of biological role, catalyzes the attachment of glutamate to tRNA(Glu) in a two-step reaction: glutamate is first activated by ATP to form Glu-AMP and then transferred to the acceptor end of tRNA(Glu). The protein is Glutamate--tRNA ligase of Haemophilus ducreyi (strain 35000HP / ATCC 700724).